A 62-amino-acid polypeptide reads, in one-letter code: U8-theraphotoxin-Cg1a 1 (62 aa).

Residues 1 to 21 (MKTLVLFIIFGLAALFLLSSA) form the signal peptide. The propeptide occupies 22-29 (NELEETER). 3 disulfides stabilise this stretch: C31/C46, C38/C51, and C45/C58.

Belongs to the neurotoxin 10 (Hwtx-1) family. 30 (Jztx-14) subfamily. As to expression, expressed by the venom gland.

It is found in the secreted. Its function is as follows. Probable ion channel inhibitor. In Chilobrachys guangxiensis (Chinese earth tiger tarantula), this protein is U8-theraphotoxin-Cg1a 1.